Reading from the N-terminus, the 296-residue chain is DNA primase small subunit PriS (296 aa).

Active-site residues include Asp82, Asp84, and Asp191.

This sequence belongs to the eukaryotic-type primase small subunit family. In terms of assembly, heterodimer of a small subunit (PriS) and a large subunit (PriL). Requires Mg(2+) as cofactor. It depends on Mn(2+) as a cofactor.

Catalytic subunit of DNA primase, an RNA polymerase that catalyzes the synthesis of short RNA molecules used as primers for DNA polymerase during DNA replication. The small subunit contains the primase catalytic core and has DNA synthesis activity on its own. Binding to the large subunit stabilizes and modulates the activity, increasing the rate of DNA synthesis while decreasing the length of the DNA fragments, and conferring RNA synthesis capability. The DNA polymerase activity may enable DNA primase to also catalyze primer extension after primer synthesis. May also play a role in DNA repair. The polypeptide is DNA primase small subunit PriS (Methanopyrus kandleri (strain AV19 / DSM 6324 / JCM 9639 / NBRC 100938)).